Reading from the N-terminus, the 209-residue chain is Ribosomal RNA large subunit methyltransferase E (209 aa).

Gly63, Trp65, Asp83, Asp99, and Asp124 together coordinate S-adenosyl-L-methionine. Catalysis depends on Lys164, which acts as the Proton acceptor.

This sequence belongs to the class I-like SAM-binding methyltransferase superfamily. RNA methyltransferase RlmE family.

The protein resides in the cytoplasm. It catalyses the reaction uridine(2552) in 23S rRNA + S-adenosyl-L-methionine = 2'-O-methyluridine(2552) in 23S rRNA + S-adenosyl-L-homocysteine + H(+). Its function is as follows. Specifically methylates the uridine in position 2552 of 23S rRNA at the 2'-O position of the ribose in the fully assembled 50S ribosomal subunit. This Shewanella sp. (strain ANA-3) protein is Ribosomal RNA large subunit methyltransferase E.